We begin with the raw amino-acid sequence, 186 residues long: Large ribosomal subunit protein bL9 (186 aa).

Residues 151-167 (PEEAEKQARGEAIMREE) show a composition bias toward basic and acidic residues. The interval 151-186 (PEEAEKQARGEAIMREESEYELETGEEVAEGPEQTA) is disordered. The segment covering 168 to 180 (SEYELETGEEVAE) has biased composition (acidic residues).

It belongs to the bacterial ribosomal protein bL9 family.

In terms of biological role, binds to the 23S rRNA. The protein is Large ribosomal subunit protein bL9 of Acidiphilium cryptum (strain JF-5).